Consider the following 243-residue polypeptide: Probable transcriptional regulator ycf27 (243 aa).

A Response regulatory domain is found at 7 to 120 (KILVVDDEAS…ELEARIRSVL (114 aa)). Position 56 is a 4-aspartylphosphate (D56). Residues 76–94 (DVPIIMLTALGEVCDRITG) constitute a DNA-binding region (H-T-H motif). Residues 135–236 (SGIISIGFLK…ARGTGYLFQR (102 aa)) constitute a DNA-binding region (ompR/PhoB-type).

The protein localises to the plastid. It localises to the chloroplast. In terms of biological role, probable promoter-specific protein mediating the interaction between DNA and RNA polymerase. In Porphyra purpurea (Red seaweed), this protein is Probable transcriptional regulator ycf27 (ycf27).